Reading from the N-terminus, the 89-residue chain is Sugar transporter SemiSWEET (89 aa).

3 helical membrane passes run 4–27, 35–55, and 60–82; these read ILLT…IKTI, ISVV…AYGI, and FAVL…ITLI. Residues 7–59 form the PQ-loop domain; the sequence is TGLFAAFFTTFAFAPQSIKTIRTRNTEGISVVMYIMFLTGVISWIAYGIMRSD.

As to quaternary structure, homodimer.

The protein localises to the cell membrane. Functionally, the homodimer mediates transmembrane sugar transport down a concentration gradient. Transport is probably effected by rocking-type movements, where a cargo-binding cavity opens first on one and then on the other side of the membrane. In Escherichia coli (strain UMEA 3162-1), this protein is Sugar transporter SemiSWEET.